The following is a 114-amino-acid chain: Histone H2A.Z-specific chaperone chz-1 (114 aa).

A compositionally biased stretch (polar residues) spans 1–22 (MSTENGTTDTTLAGTAEANTPF). The interval 1–114 (MSTENGTTDT…FVPEDEEMEE (114 aa)) is disordered. Over residues 24–40 (SKGKGKAAAESEDHPMG) the composition is skewed to basic and acidic residues. Acidic residues-rich tracts occupy residues 41–68 (EAED…EEID) and 93–114 (PAEE…EMEE).

The protein belongs to the CHZ1 family. As to quaternary structure, forms a heterotrimer with H2A.Z-H2B, stabilizing the association of the histone dimer. Also, with a lower affinity, forms a heterotrimer with H2A-H2B.

The protein resides in the nucleus. In terms of biological role, forms a chaperone-bound H2A.Z-H2B complex that acts as a source for SWR1 complex-dependent H2A to H2A.Z histone replacement in chromatin. This Neurospora crassa (strain ATCC 24698 / 74-OR23-1A / CBS 708.71 / DSM 1257 / FGSC 987) protein is Histone H2A.Z-specific chaperone chz-1 (chz-1).